The sequence spans 357 residues: DNA polymerase IV (357 aa).

Residues 4-185 (IIHCDCDCFY…LPVERLFGVG (182 aa)) enclose the UmuC domain. Mg(2+)-binding residues include D8 and D103. The active site involves E104.

The protein belongs to the DNA polymerase type-Y family. In terms of assembly, monomer. Mg(2+) is required as a cofactor.

It is found in the cytoplasm. It carries out the reaction DNA(n) + a 2'-deoxyribonucleoside 5'-triphosphate = DNA(n+1) + diphosphate. In terms of biological role, poorly processive, error-prone DNA polymerase involved in untargeted mutagenesis. Copies undamaged DNA at stalled replication forks, which arise in vivo from mismatched or misaligned primer ends. These misaligned primers can be extended by PolIV. Exhibits no 3'-5' exonuclease (proofreading) activity. May be involved in translesional synthesis, in conjunction with the beta clamp from PolIII. The protein is DNA polymerase IV of Ralstonia nicotianae (strain ATCC BAA-1114 / GMI1000) (Ralstonia solanacearum).